The sequence spans 311 residues: GTP cyclohydrolase MptA (311 aa).

Belongs to the GTP cyclohydrolase IV family. Homodimer. The cofactor is Fe(2+).

The catalysed reaction is GTP + H2O = 7,8-dihydroneopterin 2',3'-cyclic phosphate + formate + diphosphate + H(+). The protein operates within cofactor biosynthesis; 5,6,7,8-tetrahydromethanopterin biosynthesis. Converts GTP to 7,8-dihydro-D-neopterin 2',3'-cyclic phosphate, the first intermediate in the biosynthesis of coenzyme methanopterin. The sequence is that of GTP cyclohydrolase MptA from Halobacterium salinarum (strain ATCC 29341 / DSM 671 / R1).